A 406-amino-acid polypeptide reads, in one-letter code: B3 domain-containing protein Os11g0197600 (406 aa).

Residues 1–20 (MVVREKQGGRMGKGKGKGKE) form a disordered region. A DNA-binding region (TF-B3 1) is located at residues 30–123 (RSFFRVLLTL…QFSVTVFEPS (94 aa)). The interval 199 to 245 (ESSRRKRAGASAGKSKVTSTSHNSTRGSSCSSDEDNSSSKSPNPPFL) is disordered. Polar residues predominate over residues 214–225 (KVTSTSHNSTRG). The TF-B3 2 DNA-binding region spans 298-393 (AVQIMMESYV…NIKVHIYRVV (96 aa)).

The protein localises to the nucleus. In Oryza sativa subsp. japonica (Rice), this protein is B3 domain-containing protein Os11g0197600.